The chain runs to 344 residues: tRNA N6-adenosine threonylcarbamoyltransferase (344 aa).

Residues His111 and His115 each coordinate Fe cation. Substrate is bound by residues 133–137 (VVSGG), Asp166, Gly179, Asp183, and Asn270. Asp298 is a binding site for Fe cation.

This sequence belongs to the KAE1 / TsaD family. Requires Fe(2+) as cofactor.

The protein resides in the cytoplasm. It catalyses the reaction L-threonylcarbamoyladenylate + adenosine(37) in tRNA = N(6)-L-threonylcarbamoyladenosine(37) in tRNA + AMP + H(+). Required for the formation of a threonylcarbamoyl group on adenosine at position 37 (t(6)A37) in tRNAs that read codons beginning with adenine. Is involved in the transfer of the threonylcarbamoyl moiety of threonylcarbamoyl-AMP (TC-AMP) to the N6 group of A37, together with TsaE and TsaB. TsaD likely plays a direct catalytic role in this reaction. This Persephonella marina (strain DSM 14350 / EX-H1) protein is tRNA N6-adenosine threonylcarbamoyltransferase.